The sequence spans 341 residues: MIDDRKNKVLQAIIEDYVATAEPVGSRTIARKYNLGVSPATIRNEMSDLEELGYLEQPHTSAGRIPSNLGYRYYVDCLMPERPINPAEQELIRSTFQRKIRELDTLVRETARLLSETTHLTAVISGPQFEKAVFKEIRIVPLGNDRALLIYITDSGLVENQVVEVPLQVTMLELQQVAELLSEHLRGRRVETLSRTALQSLHRELSRYGTLLEQALHFLEQKLEPGDRHRLYFGGTSHMLDQPEFRDVQKLRGVLSFLEQEEAVAAVLGLDRLTEGVEIQIGEEIRLRELADCSVVTATYRVGDRIIGKMGVIGPRRMEYPKVVSILNAIASHLSEMNRLF.

This sequence belongs to the HrcA family.

Its function is as follows. Negative regulator of class I heat shock genes (grpE-dnaK-dnaJ and groELS operons). Prevents heat-shock induction of these operons. This is Heat-inducible transcription repressor HrcA from Symbiobacterium thermophilum (strain DSM 24528 / JCM 14929 / IAM 14863 / T).